The sequence spans 167 residues: Large ribosomal subunit protein uL10 (167 aa).

The protein belongs to the universal ribosomal protein uL10 family. In terms of assembly, part of the ribosomal stalk of the 50S ribosomal subunit. The N-terminus interacts with L11 and the large rRNA to form the base of the stalk. The C-terminus forms an elongated spine to which L12 dimers bind in a sequential fashion forming a multimeric L10(L12)X complex.

Its function is as follows. Forms part of the ribosomal stalk, playing a central role in the interaction of the ribosome with GTP-bound translation factors. The chain is Large ribosomal subunit protein uL10 from Yersinia enterocolitica serotype O:8 / biotype 1B (strain NCTC 13174 / 8081).